The primary structure comprises 721 residues: MQGQTQSISFDGREIRLTTGRYAPQAGGSVMIECGDTSVLVTATRSKGRDGIDFLPLICDYEERLYAAGRIPGSFMRRESRPPERATLICRLIDRPMRPLFPSWLRDDLQIVATCMSLDERVPADVLAVTGASMATLLAKIPFYGPMAAVRVGLLGDDFVLNPSYREIERGDLDLVVAGTPQGVVMVEAGANQLPEGDVIEAIDFGYEAVSELIKAQQSILKEAGIEQVIPEAPEQDKTLPVYLEKACSKSIGEVLGQFEQTKAERDEKLDAIRSTTAETIQGLKDSDPVRVAVSANGKALPNSFKALTKTLMRQQILKDGKRVDGRNLDQVRPISAAAGVLPKRVHGSGLFQRGLTQVLSTATLGTPSDAQEMDDLNPSNEKTYLHHYNFPAYSVGETRPMRSPGRREIGHGALAERAIVPVLPAKDTFPYVVRVVSEVLSSNGSTSMGSVCGSTLALMDAGVPLKSPVSGAAMGLIKEGDEVKILTDIQGIEDFLVDMDFKVAGTDKGITALQMDMKITGLPVSIVADAVNQARPARLHILEKMMEAIESPREGLSPHAPRLLSFRIDPELIGTVIGPGGRTIKNITERTNTKIDIEDSGIVTIASHDGAAAEEAQKIIEGLTRKVNEGEVFTGSITRIIPIGAFVEILPGKEGMIHISQLSEARVEKVEDVVKVGDEVTVRVREIDNRGRINLTLRGVPQSGESADSQPAPTPVAPLS.

Mg(2+) is bound by residues aspartate 495 and aspartate 501. The KH domain occupies 562 to 621 (PRLLSFRIDPELIGTVIGPGGRTIKNITERTNTKIDIEDSGIVTIASHDGAAAEEAQKII). The 69-residue stretch at 631 to 699 (GEVFTGSITR…NRGRINLTLR (69 aa)) folds into the S1 motif domain. Positions 700–721 (GVPQSGESADSQPAPTPVAPLS) are disordered.

The protein belongs to the polyribonucleotide nucleotidyltransferase family. Requires Mg(2+) as cofactor.

The protein localises to the cytoplasm. It carries out the reaction RNA(n+1) + phosphate = RNA(n) + a ribonucleoside 5'-diphosphate. Functionally, involved in mRNA degradation. Catalyzes the phosphorolysis of single-stranded polyribonucleotides processively in the 3'- to 5'-direction. The sequence is that of Polyribonucleotide nucleotidyltransferase from Synechococcus sp. (strain CC9311).